The primary structure comprises 832 residues: Protein P (832 aa).

The segment at 1-177 (MPLSYQHFRK…FCGSPYSWEQ (177 aa)) is terminal protein domain (TP). The tract at residues 178-335 (ELQHGAESFH…YCLSHIVNLL (158 aa)) is spacer. Residues 186–206 (FHQQSSGILSRPSVGSSLQSK) are compositionally biased toward polar residues. 2 disordered regions span residues 186–255 (FHQQ…GHNA) and 280–305 (TSEN…RSQS). Over residues 210-220 (SRLGLQSQQGH) the composition is skewed to low complexity. The segment at 336–679 (EDWGPCAEHG…YLNLYPVARQ (344 aa)) is polymerase/reverse transcriptase domain (RT). Positions 346-589 (EHHIRIPRTP…YSLNFMGYVI (244 aa)) constitute a Reverse transcriptase domain. Positions 418, 540, and 541 each coordinate Mg(2+).

This sequence belongs to the hepadnaviridae P protein family.

The enzyme catalyses DNA(n) + a 2'-deoxyribonucleoside 5'-triphosphate = DNA(n+1) + diphosphate. It catalyses the reaction Endonucleolytic cleavage to 5'-phosphomonoester.. Its activity is regulated as follows. Activated by host HSP70 and HSP40 in vitro to be able to bind the epsilon loop of the pgRNA. Because deletion of the RNase H region renders the protein partly chaperone-independent, the chaperones may be needed indirectly to relieve occlusion of the RNA-binding site by this domain. Inhibited by several reverse-transcriptase inhibitors: Lamivudine, Adefovir and Entecavir. Multifunctional enzyme that converts the viral RNA genome into dsDNA in viral cytoplasmic capsids. This enzyme displays a DNA polymerase activity that can copy either DNA or RNA templates, and a ribonuclease H (RNase H) activity that cleaves the RNA strand of RNA-DNA heteroduplexes in a partially processive 3'- to 5'-endonucleasic mode. Neo-synthesized pregenomic RNA (pgRNA) are encapsidated together with the P protein, and reverse-transcribed inside the nucleocapsid. Initiation of reverse-transcription occurs first by binding the epsilon loop on the pgRNA genome, and is initiated by protein priming, thereby the 5'-end of (-)DNA is covalently linked to P protein. Partial (+)DNA is synthesized from the (-)DNA template and generates the relaxed circular DNA (RC-DNA) genome. After budding and infection, the RC-DNA migrates in the nucleus, and is converted into a plasmid-like covalently closed circular DNA (cccDNA). The activity of P protein does not seem to be necessary for cccDNA generation, and is presumably released from (+)DNA by host nuclear DNA repair machinery. This chain is Protein P, found in Hepatitis B virus genotype D subtype ayw (isolate Australia/AustKW/1991) (HBV-D).